Here is a 497-residue protein sequence, read N- to C-terminus: Ganglioside-induced differentiation-associated-protein 2 (497 aa).

Residues 43–223 (RSPFLYNRDI…TYQKLLPLYF (181 aa)) form the Macro domain. Serine 280 carries the post-translational modification Phosphoserine. The 149-residue stretch at 333 to 481 (DIASLKALYQ…FPPFVLEYDA (149 aa)) folds into the CRAL-TRIO domain.

The protein belongs to the GDAP2 family.

This Rattus norvegicus (Rat) protein is Ganglioside-induced differentiation-associated-protein 2 (Gdap2).